A 135-amino-acid chain; its full sequence is 6-pyruvoyl tetrahydrobiopterin synthase (135 aa).

His-17 lines the Zn(2+) pocket. Cys-36 functions as the Proton acceptor in the catalytic mechanism. Zn(2+) contacts are provided by His-40 and His-42. Active-site charge relay system residues include His-81 and Glu-124.

This sequence belongs to the PTPS family. In terms of assembly, homohexamer formed of two homotrimers in a head to head fashion. Requires Zn(2+) as cofactor.

It catalyses the reaction 7,8-dihydroneopterin 3'-triphosphate = 6-pyruvoyl-5,6,7,8-tetrahydropterin + triphosphate + H(+). Its pathway is cofactor biosynthesis; tetrahydrobiopterin biosynthesis; tetrahydrobiopterin from 7,8-dihydroneopterin triphosphate: step 1/3. Functionally, involved in the biosynthesis of tetrahydrobiopterin, an essential cofactor of aromatic amino acid hydroxylases. Catalyzes the transformation of 7,8-dihydroneopterin triphosphate into 6-pyruvoyl tetrahydropterin. This chain is 6-pyruvoyl tetrahydrobiopterin synthase (ptsA), found in Dictyostelium discoideum (Social amoeba).